We begin with the raw amino-acid sequence, 467 residues long: Probable protein phosphatase 2C 55 (467 aa).

In terms of domain architecture, PPM-type phosphatase spans 222–458 (SCYLPHPDKE…DDITVVVSYV (237 aa)). Mn(2+)-binding residues include aspartate 252, glycine 253, aspartate 383, and aspartate 449.

The protein belongs to the PP2C family. It depends on Mg(2+) as a cofactor. Mn(2+) serves as cofactor.

It catalyses the reaction O-phospho-L-seryl-[protein] + H2O = L-seryl-[protein] + phosphate. The catalysed reaction is O-phospho-L-threonyl-[protein] + H2O = L-threonyl-[protein] + phosphate. The sequence is that of Probable protein phosphatase 2C 55 from Arabidopsis thaliana (Mouse-ear cress).